The primary structure comprises 425 residues: Serine--tRNA ligase (425 aa).

233-235 serves as a coordination point for L-serine; sequence TAE. ATP is bound at residue 264–266; it reads RRE. Glu287 contacts L-serine. ATP is bound at residue 351-354; that stretch reads EISS. Residue Ser385 coordinates L-serine.

This sequence belongs to the class-II aminoacyl-tRNA synthetase family. Type-1 seryl-tRNA synthetase subfamily. As to quaternary structure, homodimer. The tRNA molecule binds across the dimer.

Its subcellular location is the cytoplasm. The enzyme catalyses tRNA(Ser) + L-serine + ATP = L-seryl-tRNA(Ser) + AMP + diphosphate + H(+). It carries out the reaction tRNA(Sec) + L-serine + ATP = L-seryl-tRNA(Sec) + AMP + diphosphate + H(+). It participates in aminoacyl-tRNA biosynthesis; selenocysteinyl-tRNA(Sec) biosynthesis; L-seryl-tRNA(Sec) from L-serine and tRNA(Sec): step 1/1. Functionally, catalyzes the attachment of serine to tRNA(Ser). Is also able to aminoacylate tRNA(Sec) with serine, to form the misacylated tRNA L-seryl-tRNA(Sec), which will be further converted into selenocysteinyl-tRNA(Sec). The sequence is that of Serine--tRNA ligase from Prochlorococcus marinus (strain SARG / CCMP1375 / SS120).